A 255-amino-acid chain; its full sequence is Ribosomal RNA small subunit methyltransferase G 2 (255 aa).

The S-adenosyl-L-methionine site is built by glycine 90, phenylalanine 95, and arginine 155. The segment covering 233-245 has biased composition (acidic residues); that stretch reads EDEGEELLMDELS. The segment at 233-255 is disordered; the sequence is EDEGEELLMDELSNEEKRRWAKY. Over residues 246–255 the composition is skewed to basic and acidic residues; the sequence is NEEKRRWAKY.

Belongs to the methyltransferase superfamily. RNA methyltransferase RsmG family.

It localises to the cytoplasm. The catalysed reaction is guanosine(527) in 16S rRNA + S-adenosyl-L-methionine = N(7)-methylguanosine(527) in 16S rRNA + S-adenosyl-L-homocysteine. In terms of biological role, specifically methylates the N7 position of guanine in position 527 of 16S rRNA. The protein is Ribosomal RNA small subunit methyltransferase G 2 of Bdellovibrio bacteriovorus (strain ATCC 15356 / DSM 50701 / NCIMB 9529 / HD100).